Consider the following 2962-residue polypeptide: Sex determination and dosage compensation protein sdc-2 (2962 aa).

2 disordered regions span residues 1 to 28 (MSDE…ADPD) and 1061 to 1110 (DKRS…QVDP). A compositionally biased stretch (acidic residues) spans 15-27 (SFNESDSPDEADP). Coiled-coil stretches lie at residues 995–1085 (LESA…LADK) and 1140–1268 (REER…KRVS). Disordered stretches follow at residues 1535-1554 (PASL…GSPV) and 2198-2227 (LDSS…NQLD). Acidic residues predominate over residues 2212 to 2225 (FEDSPSEDENDENQ).

As to quaternary structure, component of the SDC complex, which consists of sdc-1, sdc-2 and sdc-3. Within the complex, interacts with sdc-1 and sdc-3. As to expression, expressed in hermaphrodites (XX), but absent in males (XO) (at protein level).

Its subcellular location is the chromosome. In terms of biological role, component of the SDC complex that functions in sex determination and in X chromosome dosage compensation specifically in hermaphrodite (XX) animals. Required for the recruitment of the condensin I-like dosage compensation complex to the male sex-determining autosomal gene her-1, thereby contributing to its repression and initiating hermaphrodite sexual development. Plays a central role in X-chromosome recognition and in the recruitment and assembly of the dosage compensation complex and the dosage compensation protein dpy-21 onto the X chromosomes in hermaphrodites, which leads to a reduction of X-linked gene transcription and an equalization of X-linked gene expression between the sexes. May confer protection against toxicity induced by heavy metals such as arsenite. The chain is Sex determination and dosage compensation protein sdc-2 from Caenorhabditis elegans.